A 223-amino-acid chain; its full sequence is Rab-like protein 2A (223 aa).

Residues glycine 28–serine 35, aspartate 76–glutamine 80, and asparagine 133–aspartate 136 contribute to the GTP site. Residues lysine 200–serine 223 are disordered. The span at glycine 210 to serine 223 shows a compositional bias: polar residues.

Belongs to the small GTPase superfamily. Rab family. In terms of assembly, interacts with IFT27, IFT81, IFT172, ATP6V1E1, HK1, LDHC, MAPRE1 and HSPA2. In terms of tissue distribution, isoform 2 is expressed in the testis and localizes to the mid-piece of the sperm tail (at protein level). Isoform 2 is expressed at higher levels in testis than isoform 1. Isoform 1 and isoform 2 are widely expressed and notably within other tissues containing motile cilia including the lung, trachea, brain, ovary and kidney.

Plays an essential role in male fertility, sperm intra-flagellar transport, and tail assembly. Binds, in a GTP-regulated manner, to a specific set of effector proteins including key proteins involved in cilia development and function and delivers them into the growing sperm tail. The polypeptide is Rab-like protein 2A (Rabl2) (Mus musculus (Mouse)).